A 234-amino-acid chain; its full sequence is Elongation factor Tu, chloroplastic (234 aa).

In terms of domain architecture, tr-type G spans 1–125; sequence KNMITGAAQM…KVDSYIPTPE (125 aa). 47 to 50 provides a ligand contact to GTP; the sequence is NKQD.

Belongs to the TRAFAC class translation factor GTPase superfamily. Classic translation factor GTPase family. EF-Tu/EF-1A subfamily.

The protein resides in the plastid. Its subcellular location is the chloroplast. It carries out the reaction GTP + H2O = GDP + phosphate + H(+). Functionally, GTP hydrolase that promotes the GTP-dependent binding of aminoacyl-tRNA to the A-site of ribosomes during protein biosynthesis. In Pandorina morum (Freshwater green alga), this protein is Elongation factor Tu, chloroplastic (tufA).